The chain runs to 529 residues: Delayed-rectifier potassium channel regulatory subunit KCNS1 (529 aa).

The Cytoplasmic segment spans residues 1-217; sequence MLMLLVRGTH…LTMENPGYSL (217 aa). A helical transmembrane segment spans residues 218–239; it reads PSKLFSCVSISVVLASIAAMCI. The Extracellular portion of the chain corresponds to 240 to 270; sequence HSLPEYQAREAAAAVAAVAAGRSPEGVRDDP. The chain crosses the membrane as a helical span at residues 271-293; sequence VLRRLEYFCIAWFSFEVSSRLLL. Residues 294 to 304 are Cytoplasmic-facing; that stretch reads APSTRNFFCHP. Residues 305–322 form a helical membrane-spanning segment; it reads LNLIDIVSVLPFYLTLLA. Topologically, residues 323–340 are extracellular; that stretch reads GVALGDQGGTGGKELGHL. The helical; Voltage-sensor transmembrane segment at 341–361 threads the bilayer; the sequence is GKVVQVFRLMRIFRVLKLARH. The Cytoplasmic segment spans residues 362–376; that stretch reads STGLRSLGATLKHSY. Residues 377–398 traverse the membrane as a helical segment; that stretch reads REVGILLLYLAVGVSVFSGVAY. The Extracellular portion of the chain corresponds to 399 to 411; sequence TAEKEEDVGFNTI. The helical intramembrane region spans 412–423; the sequence is PACWWWGTVSMT. Positions 424–429 match the Selectivity filter motif; sequence TVGYGD. Residues 424–431 lie within the membrane without spanning it; sequence TVGYGDVV. Over 432 to 438 the chain is Extracellular; sequence PVTVAGK. The helical transmembrane segment at 439-467 threads the bilayer; it reads LAASGCILGGILVVALPITIIFNKFSHFY. Topologically, residues 468 to 529 are cytoplasmic; sequence RRQKALEAAV…PSEPPHPQMY (62 aa). Positions 494-529 are disordered; the sequence is GVSEASLETSRETSQEGRSADLETQAPSEPPHPQMY. Residues 502–514 show a composition bias toward basic and acidic residues; it reads TSRETSQEGRSAD.

The protein belongs to the potassium channel family. S (TC 1.A.1.2) subfamily. Kv9.1/KCNS1 sub-subfamily. In terms of assembly, heterotetramer with KCNB1. Heterotetramer with KCNB2. Does not form homomultimers.

The protein resides in the cell membrane. In terms of biological role, potassium channel regulatory subunit that modulate the delayed rectifier voltage-gated potassium channel activity of KCNB1 and KCNB2 by altering their kinetics, expression levels, and shifting the half-inactivation potential to more polarized values. While it does not form functional channels on its own, it can form functional heterotetrameric channels with KCNB1 and KCNB2. Each regulatory subunit has unique regulatory properties that can lead to extensive inhibition, significant changes in kinetics, and/or substantial shifts in the voltage dependencies of the inactivation process. This is Delayed-rectifier potassium channel regulatory subunit KCNS1 from Macaca mulatta (Rhesus macaque).